We begin with the raw amino-acid sequence, 61 residues long: DGYIKRHDGCKVTCLINDNYCDTECKREGGSYGYCYSVGFACWCEGLPDDKAWKSETNTCD.

The region spanning 1 to 61 (DGYIKRHDGC…AWKSETNTCD (61 aa)) is the LCN-type CS-alpha/beta domain. 4 cysteine pairs are disulfide-bonded: Cys-10/Cys-60, Cys-14/Cys-35, Cys-21/Cys-42, and Cys-25/Cys-44.

Expressed by the venom gland.

The protein localises to the secreted. Its function is as follows. Excitatory insect toxins induce a spastic paralysis. They bind voltage-independently to sodium channels (Nav) and shift the voltage of activation toward more negative potentials thereby affecting sodium channel activation and promoting spontaneous and repetitive firing. This toxin elicits excitatory activity with no flaccid paralysis despite its high degree of sequence similarity with other depressant insect toxins. This toxin is active only on insects. The protein is Insect toxin AaHIT5 of Androctonus australis (Sahara scorpion).